A 377-amino-acid chain; its full sequence is Gap junction gamma-1 protein (377 aa).

The Cytoplasmic segment spans residues 1-18; sequence MSWSFLTRLLEEINNHST. Residues 19-39 traverse the membrane as a helical segment; it reads FVGKIWLTVLIIFRIVLTAVG. Residues 40–75 lie on the Extracellular side of the membrane; that stretch reads GESIYYDEQSKFTCNTHQPGCENVCYDAFAPLSHVR. A helical transmembrane segment spans residues 76–96; sequence FWVFQIILITTPSIMYLGFAM. The Cytoplasmic portion of the chain corresponds to 97–174; sequence HRIARQPDEQ…RRIKQDGLMK (78 aa). The interval 129–163 is disordered; it reads DYEEAEDNQEEDPMICEEEEPEKDSEKGDKKKHDG. Positions 131 to 151 are enriched in acidic residues; sequence EEAEDNQEEDPMICEEEEPEK. Residues 175 to 197 traverse the membrane as a helical segment; the sequence is VYVLQLLFRSVFEVGFLMGQYVL. Topologically, residues 198 to 228 are extracellular; it reads YGFEVIPFFVCSRNPCPHTVDCFVSRPTEKT. Residues 229–249 form a helical membrane-spanning segment; the sequence is IFLLIMYAVSALCLFLNLCEL. Residues 250–377 are Cytoplasmic-facing; it reads FHLGIGGIRD…GVGSREKSGL (128 aa). Disordered stretches follow at residues 266-286 and 341-377; these read KEIQESRKKKPSAPPNYHSVL and AHASRSSSPEANSIAAEQNRLNLAQEKGVGSREKSGL. Residues 344 to 362 show a composition bias toward polar residues; the sequence is SRSSSPEANSIAAEQNRLN.

It belongs to the connexin family. Gamma-type subfamily. A connexon is composed of a hexamer of connexins.

The protein resides in the cell membrane. It localises to the cell junction. It is found in the gap junction. Functionally, one gap junction consists of a cluster of closely packed pairs of transmembrane channels, the connexons, through which materials of low MW diffuse from one cell to a neighboring cell. This is Gap junction gamma-1 protein (gjc1) from Xenopus laevis (African clawed frog).